Reading from the N-terminus, the 262-residue chain is Acyl-[acyl-carrier-protein]--UDP-N-acetylglucosamine O-acyltransferase (262 aa).

Belongs to the transferase hexapeptide repeat family. LpxA subfamily. Homotrimer.

The protein resides in the cytoplasm. It catalyses the reaction a (3R)-hydroxyacyl-[ACP] + UDP-N-acetyl-alpha-D-glucosamine = a UDP-3-O-[(3R)-3-hydroxyacyl]-N-acetyl-alpha-D-glucosamine + holo-[ACP]. It functions in the pathway glycolipid biosynthesis; lipid IV(A) biosynthesis; lipid IV(A) from (3R)-3-hydroxytetradecanoyl-[acyl-carrier-protein] and UDP-N-acetyl-alpha-D-glucosamine: step 1/6. Its function is as follows. Involved in the biosynthesis of lipid A, a phosphorylated glycolipid that anchors the lipopolysaccharide to the outer membrane of the cell. In Burkholderia mallei (strain NCTC 10247), this protein is Acyl-[acyl-carrier-protein]--UDP-N-acetylglucosamine O-acyltransferase.